A 311-amino-acid polypeptide reads, in one-letter code: DNA-directed RNA polymerase subunit alpha (311 aa).

Residues 1-227 (MNNISIKCLK…DLFTLLINNK (227 aa)) form an alpha N-terminal domain (alpha-NTD) region. Residues 242–311 (ISIEPYTNIA…LKNKLGIILK (70 aa)) form an alpha C-terminal domain (alpha-CTD) region.

Belongs to the RNA polymerase alpha chain family. In terms of assembly, in plastids the minimal PEP RNA polymerase catalytic core is composed of four subunits: alpha, beta, beta', and beta''. When a (nuclear-encoded) sigma factor is associated with the core the holoenzyme is formed, which can initiate transcription.

The protein resides in the plastid. Its subcellular location is the chloroplast. It carries out the reaction RNA(n) + a ribonucleoside 5'-triphosphate = RNA(n+1) + diphosphate. In terms of biological role, DNA-dependent RNA polymerase catalyzes the transcription of DNA into RNA using the four ribonucleoside triphosphates as substrates. The polypeptide is DNA-directed RNA polymerase subunit alpha (Phaeodactylum tricornutum (strain CCAP 1055/1)).